The primary structure comprises 157 residues: Class 10 plant pathogenesis-related protein 2E (157 aa).

Asp8 is a binding site for trans-zeatin. Pro32, Val35, and Ile38 together coordinate Ca(2+). Positions 60, 69, 81, and 83 each coordinate trans-zeatin.

This sequence belongs to the BetVI family.

It localises to the cytoplasm. The protein localises to the cytosol. Class II ribonuclease (RNase). Binds to cytokinins. Interacts with melatonin. In Lupinus luteus (European yellow lupine), this protein is Class 10 plant pathogenesis-related protein 2E.